The chain runs to 694 residues: Follicle-stimulating hormone receptor (694 aa).

Residues 1–17 form the signal peptide; that stretch reads MAFLWISFLVFLGSGSG. Cystine bridges form between C18–C25 and C23–C32. The region spanning 18–46 is the LRRNT domain; the sequence is CHHRICHCSDRVFICQESKVTEIPSDIPR. The Extracellular portion of the chain corresponds to 18 to 367; it reads CHHRICHCSD…EDIMGYNFLR (350 aa). LRR repeat units lie at residues 49-72, 73-97, 98-118, 119-143, 144-169, 170-192, 193-216, 217-240, and 241-259; these read VEMR…FRDL, EKIE…LPKL, HEIR…AFWN, LPNL…KIQS, HQKV…AGLS, SESE…AFNG, TQLD…IFQG, ANGP…GLKN, and LKKL…PNLD. Residues N191 and N199 are each glycosylated (N-linked (GlcNAc...) asparagine). Residue N268 is glycosylated (N-linked (GlcNAc...) asparagine). Disulfide bonds link C275–C347, C276–C292, C276–C357, and C292–C339. Residue N293 is glycosylated (N-linked (GlcNAc...) asparagine). Sulfotyrosine is present on Y336. A helical membrane pass occupies residues 368–388; the sequence is VLIWFISILSITGNIVVLVIL. Topologically, residues 389–399 are cytoplasmic; sequence ITSQYKLTVPR. A helical transmembrane segment spans residues 400-422; it reads FLMCNLAFADLCIGIYLLLIASV. Over 423–444 the chain is Extracellular; the sequence is DIHTKSQYHNYAIDWQTGAGCD. The cysteines at positions 443 and 518 are disulfide-linked. A helical transmembrane segment spans residues 445-466; the sequence is AAGFFTVFASELSVYTLTAITL. The Cytoplasmic segment spans residues 467 to 486; that stretch reads ERWHTITYAMQLDRKVRLRH. Residues 487 to 509 form a helical membrane-spanning segment; it reads AASIMLIGWIFAFSVALLPIFGV. The Extracellular portion of the chain corresponds to 510-529; the sequence is SSYMKVSICLPMDIDSPLSQ. A helical membrane pass occupies residues 530 to 551; that stretch reads FYVISLLVLNVLASVIICTCYT. The Cytoplasmic segment spans residues 552–574; that stretch reads HIYFTVRNPNIISSTSDAKIAKR. The chain crosses the membrane as a helical span at residues 575 to 598; it reads MAMLIFTDFLCMAPISFFAISASV. Topologically, residues 599-609 are extracellular; the sequence is KMPLITVSKSK. The chain crosses the membrane as a helical span at residues 610 to 631; the sequence is ILLVLFYPINSCANPFLYAVFT. Topologically, residues 632–694 are cytoplasmic; sequence KTFRRDFFIL…YKLVPLNHLS (63 aa).

This sequence belongs to the G-protein coupled receptor 1 family. FSH/LSH/TSH subfamily. In terms of assembly, homotrimer. Functions as a homotrimer binding the FSH hormone heterodimer composed of CGA and FSHB. Interacts with ARRB2. Interacts with APPL2; interaction is independent of follicle stimulating hormone stimulation. N-glycosylated; indirectly required for FSH-binding, possibly via a conformational change that allows high affinity binding of hormone. Post-translationally, sulfated.

It localises to the cell membrane. G protein-coupled receptor for follitropin, the follicle-stimulating hormone. Through cAMP production activates the downstream PI3K-AKT and ERK1/ERK2 signaling pathways. The protein is Follicle-stimulating hormone receptor (FSHR) of Notamacropus eugenii (Tammar wallaby).